A 218-amino-acid chain; its full sequence is Octanoyltransferase (218 aa).

The 184-residue stretch at 30 to 213 (GEIEDTLILV…YFSEVFNYDI (184 aa)) folds into the BPL/LPL catalytic domain. Substrate contacts are provided by residues 75–82 (RGGDVTYH), 143–145 (AIG), and 156–158 (GFA). The active-site Acyl-thioester intermediate is Cys-174.

It belongs to the LipB family.

The protein resides in the cytoplasm. It carries out the reaction octanoyl-[ACP] + L-lysyl-[protein] = N(6)-octanoyl-L-lysyl-[protein] + holo-[ACP] + H(+). It functions in the pathway protein modification; protein lipoylation via endogenous pathway; protein N(6)-(lipoyl)lysine from octanoyl-[acyl-carrier-protein]: step 1/2. In terms of biological role, catalyzes the transfer of endogenously produced octanoic acid from octanoyl-acyl-carrier-protein onto the lipoyl domains of lipoate-dependent enzymes. Lipoyl-ACP can also act as a substrate although octanoyl-ACP is likely to be the physiological substrate. The protein is Octanoyltransferase of Alkaliphilus metalliredigens (strain QYMF).